Here is a 505-residue protein sequence, read N- to C-terminus: Serine carboxypeptidase-like 47 (505 aa).

The first 22 residues, 1–22 (MEAKTFFLFMLFIFSQSWLSTS), serve as a signal peptide directing secretion. N-linked (GlcNAc...) asparagine glycosylation is found at N37, N86, and N122. Disulfide bonds link C138/C378, C306/C321, and C344/C349. The active site involves S228. The N-linked (GlcNAc...) asparagine glycan is linked to N301. Residue D416 is part of the active site. Residues N432 and N444 are each glycosylated (N-linked (GlcNAc...) asparagine). The active site involves H473.

Belongs to the peptidase S10 family. In terms of tissue distribution, expressed in roots, flowers and siliques.

It localises to the secreted. In terms of biological role, probable carboxypeptidase. The protein is Serine carboxypeptidase-like 47 (SCPL47) of Arabidopsis thaliana (Mouse-ear cress).